Reading from the N-terminus, the 547-residue chain is ATP synthase subunit alpha (547 aa).

Residue 172–179 (GDRKTGKT) participates in ATP binding.

The protein belongs to the ATPase alpha/beta chains family. As to quaternary structure, F-type ATPases have 2 components, CF(1) - the catalytic core - and CF(0) - the membrane proton channel. CF(1) has five subunits: alpha(3), beta(3), gamma(1), delta(1), epsilon(1). CF(0) has three main subunits: a(1), b(2) and c(9-12). The alpha and beta chains form an alternating ring which encloses part of the gamma chain. CF(1) is attached to CF(0) by a central stalk formed by the gamma and epsilon chains, while a peripheral stalk is formed by the delta and b chains.

It is found in the cell membrane. The catalysed reaction is ATP + H2O + 4 H(+)(in) = ADP + phosphate + 5 H(+)(out). Produces ATP from ADP in the presence of a proton gradient across the membrane. The alpha chain is a regulatory subunit. This is ATP synthase subunit alpha from Rhodococcus jostii (strain RHA1).